A 510-amino-acid polypeptide reads, in one-letter code: Maturase K (510 aa).

This sequence belongs to the intron maturase 2 family. MatK subfamily.

Its subcellular location is the plastid. It localises to the chloroplast. Functionally, usually encoded in the trnK tRNA gene intron. Probably assists in splicing its own and other chloroplast group II introns. The sequence is that of Maturase K from Thuja plicata (Western red-cedar).